Consider the following 249-residue polypeptide: Flavodoxin/ferredoxin--NADP reductase (249 aa).

The FAD-binding FR-type domain maps to 2–102 (NTWITAKIIK…KKSYGFFTLN (101 aa)). FAD is bound by residues 51 to 54 (RAYS), Tyr-67, 75 to 77 (QLT), and Thr-117. Residues 144–145 (VR), 174–175 (SR), Arg-185, and 215–217 (NPD) each bind NADP(+). 248 to 249 (YW) lines the FAD pocket.

It belongs to the ferredoxin--NADP reductase type 1 family. FAD is required as a cofactor.

The protein resides in the cytoplasm. The enzyme catalyses 2 reduced [2Fe-2S]-[ferredoxin] + NADP(+) + H(+) = 2 oxidized [2Fe-2S]-[ferredoxin] + NADPH. The catalysed reaction is reduced [flavodoxin] + NADP(+) = oxidized [flavodoxin] + NADPH + 2 H(+). Functionally, transports electrons between flavodoxin or ferredoxin and NADPH. This chain is Flavodoxin/ferredoxin--NADP reductase (fpr), found in Buchnera aphidicola subsp. Baizongia pistaciae (strain Bp).